We begin with the raw amino-acid sequence, 128 residues long: Pi-hexatoxin-Hi1c (128 aa).

An N-terminal signal peptide occupies residues 1-19 (MKLRITLALTSVLAFCVFG). Residues 20–47 (DKENENLMENLLEDDLLDIFTDAIHMER) constitute a propeptide that is removed on maturation. 6 disulfides stabilise this stretch: C54–C69, C61–C74, C68–C84, C93–C108, C100–C113, and C107–C124. Domain repeat units lie at residues 54–84 (CIAK…HEVC) and 93–124 (CLEK…HPVC). Residues 54 to 124 (CIAKWKSCAG…ERRGNKHPVC (71 aa)) form a 2 X approximate repeats with cysteine pattern C-C-CC-C-C region.

The protein belongs to the psalmotoxin-1 family. Double-knot toxin subfamily. Expressed by the venom gland.

The protein localises to the secreted. Functionally, this toxin potently and selectively inhibits ASIC1a, an isoform of the gene ASIC1. It incompletely inhibits ASIC1a activation in a pH-independent and slowly reversible manner. This toxin acts by binding to and stabilizing the closed state of the channel, thereby impeding the transition into a conducting state. This toxin may bind to the acidic pocket of ASIC1a, since mutation of a key residue of this pocket (Arg-350) abolishes the ability of the toxin to inhibit ASIC1a. In vivo, this toxin protects the brain from neuronal injury when administered up to 8 hours after stroke onset. The protein is Pi-hexatoxin-Hi1c of Hadronyche infensa (Fraser island funnel-web spider).